The chain runs to 165 residues: MKPRYRLAVERDAEQLLELTLRAYEPIRKLGIRFAAAHADLDLVLKNIRENACYVMEEDGRIIATITLRMPWGKQPGPYGVPHIWWFAVDPDTGKKGIGTKLLQWLEETILRDTLKVPFVSLGTADKHPWLIEMYERKGYVRSGEQDLGKGHITVYMKKQLRHDL.

The N-acetyltransferase domain occupies 3–162 (PRYRLAVERD…ITVYMKKQLR (160 aa)).

The protein belongs to the acetyltransferase family.

It carries out the reaction S-(2-succino)-L-cysteine + acetyl-CoA = N-acetyl-S-(2-succino)-L-cysteine + CoA + H(+). It functions in the pathway amino-acid biosynthesis; L-cysteine biosynthesis. Functionally, catalyzes the N-acetylation of S-(2-succino)cysteine. Is involved in a S-(2-succino)cysteine (2SC) degradation pathway that allows B.subtilis to grow on 2SC as a sole sulfur source, via its metabolization to cysteine. Moreover, 2SC is a toxic compound in B.subtilis at high exogenous concentrations, and this enzyme relieves 2SC toxicity via N-acetylation. This is S-(2-succino)cysteine N-acetyltransferase from Bacillus subtilis (strain 168).